Consider the following 157-residue polypeptide: Small ribosomal subunit protein bS16 (157 aa).

Positions 125 to 141 are enriched in basic and acidic residues; that stretch reads KRKAAKKAAEEAAAKEA. Residues 125-157 are disordered; that stretch reads KRKAAKKAAEEAAAKEAEAEEAAEDKAEEESAE. The span at 142 to 157 shows a compositional bias: acidic residues; sequence EAEEAAEDKAEEESAE.

It belongs to the bacterial ribosomal protein bS16 family.

This is Small ribosomal subunit protein bS16 from Corynebacterium kroppenstedtii (strain DSM 44385 / JCM 11950 / CIP 105744 / CCUG 35717).